Consider the following 326-residue polypeptide: Glyoxalase I (326 aa).

VOC domains are found at residues 22–167 (LLNH…LITY) and 182–322 (KFNH…VVPH). His25 lines the Zn(2+) pocket. Substrate is bound at residue Arg29. Residue Glu89 coordinates Zn(2+). Residues Asn93, Arg113, His117, and 147–148 (RQ) contribute to the substrate site. His117 is a binding site for Zn(2+). Residue Glu163 participates in Zn(2+) binding. Active-site proton donor/acceptor residues include Glu163 and Glu318.

It belongs to the glyoxalase I family. As to quaternary structure, monomer. Requires Zn(2+) as cofactor.

The catalysed reaction is (R)-S-lactoylglutathione = methylglyoxal + glutathione. It functions in the pathway secondary metabolite metabolism; methylglyoxal degradation; (R)-lactate from methylglyoxal: step 1/2. In terms of biological role, catalyzes the conversion of hemimercaptal, formed from methylglyoxal and glutathione, to S-lactoylglutathione. Can use gamma-glutamylcysteine as a substrate. This is Glyoxalase I from Saccharomyces cerevisiae (strain ATCC 204508 / S288c) (Baker's yeast).